The chain runs to 231 residues: Phosphatidylserine decarboxylase proenzyme (231 aa).

The active-site Schiff-base intermediate with substrate; via pyruvic acid is the Ser189. The residue at position 189 (Ser189) is a Pyruvic acid (Ser); by autocatalysis.

Belongs to the phosphatidylserine decarboxylase family. PSD-A subfamily. As to quaternary structure, heterodimer of a large membrane-associated beta subunit and a small pyruvoyl-containing alpha subunit. Pyruvate serves as cofactor. In terms of processing, is synthesized initially as an inactive proenzyme. Formation of the active enzyme involves a self-maturation process in which the active site pyruvoyl group is generated from an internal serine residue via an autocatalytic post-translational modification. Two non-identical subunits are generated from the proenzyme in this reaction, and the pyruvate is formed at the N-terminus of the alpha chain, which is derived from the carboxyl end of the proenzyme. The post-translation cleavage follows an unusual pathway, termed non-hydrolytic serinolysis, in which the side chain hydroxyl group of the serine supplies its oxygen atom to form the C-terminus of the beta chain, while the remainder of the serine residue undergoes an oxidative deamination to produce ammonia and the pyruvoyl prosthetic group on the alpha chain.

The protein resides in the cell membrane. It carries out the reaction a 1,2-diacyl-sn-glycero-3-phospho-L-serine + H(+) = a 1,2-diacyl-sn-glycero-3-phosphoethanolamine + CO2. It participates in phospholipid metabolism; phosphatidylethanolamine biosynthesis; phosphatidylethanolamine from CDP-diacylglycerol: step 2/2. Functionally, catalyzes the formation of phosphatidylethanolamine (PtdEtn) from phosphatidylserine (PtdSer). The chain is Phosphatidylserine decarboxylase proenzyme from Chelativorans sp. (strain BNC1).